A 374-amino-acid polypeptide reads, in one-letter code: Tuliposide A-converting enzyme b2, amyloplastic (374 aa).

The N-terminal 68 residues, 1–68 (MSVALFCGPP…TNSSLSPSPT (68 aa)), are a transit peptide targeting the amyloplast. S226 serves as the catalytic Acyl-ester intermediate. Active-site charge relay system residues include D316 and H348.

It belongs to the AB hydrolase superfamily. In terms of assembly, homodimer. In terms of tissue distribution, highly expressed in pistil and bulb scales. Lower expression in stem, and barely detected in root, leaf, petal and stamen.

It is found in the plastid. Its subcellular location is the amyloplast. It catalyses the reaction 6-tuliposide A = tulipalin A + D-glucose. In terms of biological role, lactone-forming carboxylesterases, specifically catalyzing intramolecular transesterification, but not hydrolysis. Involved in the biosynthesis of tulipalins, defensive chemicals that show antimicrobial activities against a broad range of strains of bacteria and fungi. Substrates are 6-tuliposide A &gt; 6-tuliposide B. The chain is Tuliposide A-converting enzyme b2, amyloplastic (TCEA-B2) from Tulipa gesneriana (Garden tulip).